The following is a 49-amino-acid chain: Turripeptide OL47 (49 aa).

The tract at residues 28–49 (RSDTEKKCTGGPDPCPPRQWPD) is disordered. Over residues 40–49 (DPCPPRQWPD) the composition is skewed to pro residues.

Post-translationally, contains 4 disulfide bonds. In terms of tissue distribution, expressed by the venom duct.

It localises to the secreted. In terms of biological role, acts as a neurotoxin by inhibiting an ion channel. This chain is Turripeptide OL47, found in Iotyrris olangoensis (Sea snail).